Here is a 141-residue protein sequence, read N- to C-terminus: Large ribosomal subunit protein bL17 (141 aa).

This sequence belongs to the bacterial ribosomal protein bL17 family. Part of the 50S ribosomal subunit. Contacts protein L32.

The sequence is that of Large ribosomal subunit protein bL17 from Rhizobium meliloti (strain 1021) (Ensifer meliloti).